The primary structure comprises 752 residues: MKVGSKELEASKVRVIVDKDPVATSFEKWAQPGHFSRTLAKGPKTTTWIWNLHADAHDFDSQTSSLEDISRKIFSAHFGQLAIIFLWVSQAYFHGARFSNYSAWLLNPTSIKPSAQVVWPVVGQEILNGDVGGGFSGVQITSGVFQMWRASGITNETELYWTAMGGLMMSALMVFAGWFHYHKAAPKLEWFQNVESMMNHHLAGLLGLGCLSWSGHQIHISLPINKLLDAGVAPQEIPLPHELLFNQDLMAQLYPSFKKGLLPFFTLNWGEYSDFLTFKGGLNPITGSLWLSDTAHHHLALAVLFIFAGHMYRTNWGIGHSMKEILEAHKGPLTGEGHKGLYEILTTSWHAQLAINLAMMGSLSIIVAHHMYAMPPYPYIAVDYPTQLSLFTHHMWIGGFCVCGAAAHGAIFMVRDYSPVQSYNNLLDRVLRHRDAIISHLNWVCIFLGTHSFGLYIHNDTMRALGRPQDMFSDKAIQLQPIFAKWVQSLHTLAPGNTAPNSLATASYAFGGDVVAVNGKIAMMPIQLGTADFLVHHIHAFTIHVTVLILLKGVLFARSSRLIPDKANLGFRFPCDGPGRGGTCQVSAWDHIFLGLFWMYNCISVVIFHFSWKMQSDVWGTISEKGKITHITGGNFANSALTINGWLRDFLWSQASQVIQSYGSALSAYGIIFLGAHFIWAFSLMFLFSGRGYWQELIESVVWAHNKLKLAPAIQPRALSITQGRAVGLAHYLLGGIGTTWSFFLARIISVG.

8 helical membrane passes run 73–96 (IFSA…FHGA), 159–182 (LYWT…FHYH), 198–222 (MNHH…HISL), 294–312 (TAHH…GHMY), 349–372 (WHAQ…HHMY), 388–414 (LSLF…IFMV), 436–458 (AIIS…LYIH), and 533–551 (FLVH…LILL). [4Fe-4S] cluster-binding residues include Cys575 and Cys584. The next 2 helical transmembrane spans lie at 591-612 (HIFL…HFSW) and 666-688 (LSAY…MFLF). His677 contacts chlorophyll a'. The chlorophyll a site is built by Met685 and Tyr693. Position 694 (Trp694) interacts with phylloquinone. A helical membrane pass occupies residues 726-746 (AVGLAHYLLGGIGTTWSFFLA).

It belongs to the PsaA/PsaB family. As to quaternary structure, the PsaA/B heterodimer binds the P700 chlorophyll special pair and subsequent electron acceptors. PSI consists of a core antenna complex that captures photons, and an electron transfer chain that converts photonic excitation into a charge separation. The eukaryotic PSI reaction center is composed of at least 11 subunits. The cofactor is P700 is a chlorophyll a/chlorophyll a' dimer, A0 is one or more chlorophyll a, A1 is one or both phylloquinones and FX is a shared 4Fe-4S iron-sulfur center..

Its subcellular location is the plastid. The protein localises to the chloroplast thylakoid membrane. It catalyses the reaction reduced [plastocyanin] + hnu + oxidized [2Fe-2S]-[ferredoxin] = oxidized [plastocyanin] + reduced [2Fe-2S]-[ferredoxin]. PsaA and PsaB bind P700, the primary electron donor of photosystem I (PSI), as well as the electron acceptors A0, A1 and FX. PSI is a plastocyanin/cytochrome c6-ferredoxin oxidoreductase, converting photonic excitation into a charge separation, which transfers an electron from the donor P700 chlorophyll pair to the spectroscopically characterized acceptors A0, A1, FX, FA and FB in turn. Oxidized P700 is reduced on the lumenal side of the thylakoid membrane by plastocyanin or cytochrome c6. This Emiliania huxleyi (Coccolithophore) protein is Photosystem I P700 chlorophyll a apoprotein A1.